The primary structure comprises 944 residues: Serine/threonine-protein kinase PLK4 (944 aa).

The Protein kinase domain maps to 12 to 265 (FKVLNLLGKG…LSSVLDHAFM (254 aa)). ATP contacts are provided by residues 18 to 26 (LGKGSFACV) and Lys41. The Proton acceptor role is filled by Asp136. Disordered stretches follow at residues 327–396 (KDKH…YSER), 432–463 (RSLE…RSND), and 530–561 (LGIK…QQAF). The span at 378-394 (RSGTSQSQTYAKPSSYS) shows a compositional bias: polar residues. Over residues 432–447 (RSLERHTSPPVKEKTP) the composition is skewed to basic and acidic residues. The segment covering 548 to 561 (FGEQSKSRVPQQAF) has biased composition (polar residues). A Cryptic POLO box 1 (CPB1) domain is found at 565-678 (TLRSIISPLN…AKFIKLVRSK (114 aa)). The Cryptic POLO box 2 (CPB2) domain occupies 679–791 (TPKVTYYTRY…GRRPALAESP (113 aa)). Positions 786–809 (ALAESPKTQPTPSVDSARERKEEQ) are disordered. One can recognise a POLO box domain in the interval 862 to 940 (QVLKSVFVEN…LSSILMLFAS (79 aa)).

The protein belongs to the protein kinase superfamily. Ser/Thr protein kinase family. CDC5/Polo subfamily. As to quaternary structure, homodimer. In terms of processing, ubiquitinated; leading to its degradation by the proteasome.

The protein resides in the cytoplasm. It is found in the cytoskeleton. It localises to the microtubule organizing center. The protein localises to the centrosome. Its subcellular location is the centriole. It carries out the reaction L-seryl-[protein] + ATP = O-phospho-L-seryl-[protein] + ADP + H(+). The catalysed reaction is L-threonyl-[protein] + ATP = O-phospho-L-threonyl-[protein] + ADP + H(+). In terms of biological role, serine/threonine-protein kinase that plays a central role in centriole duplication. Able to trigger procentriole formation on the surface of the parental centriole cylinder, leading to the recruitment of centriole biogenesis proteins such as sass6, cpap, ccp110, cep135 and gamma-tubulin. When overexpressed, it is able to induce centrosome amplification through the simultaneous generation of multiple procentrioles adjoining each parental centriole during S phase. Its central role in centriole replication suggests a possible role in tumorigenesis, centrosome aberrations being frequently observed in tumors. Also involved in deuterosome-mediated centriole amplification in multiciliated that can generate more than 100 centrioles. The sequence is that of Serine/threonine-protein kinase PLK4 from Xenopus laevis (African clawed frog).